A 726-amino-acid chain; its full sequence is MAAAKWLIASLAFASSGLAFTPEDFISAPRRGEAIPDPKGELAVFHVSKYNFDKKDRPSGWNLLNLKNGDISVLTTDSDISEITWLGDGTKIVYVNGTDSVKGGVGIWISDAKNFGNAYKAGSVNGAFSGLKLAKSGDKINFVGYGQSTTKGDLYNEAAAKEAVSSARIYDSLFVRHWDTYVGTQFNAVFSGALTKSGDKYSFDGKLKNLVHPVKYAESPYPPFGGSGDYDLSSDGKTVAFMSKAPELPKANLTTTYIFVVPHDGSRVAEPINKRNGPRTPQAIEGASSSPVFSPDGKRIAYLQMATKNYESDRRVIHIAEVGSNKPVQRIASNWDRSPEVVKWSSDGRTLYVTAEDHATGKLFTLPADARDSHKPAVVKHDGSVSSFYFVGSSKSVLISGNSLWSNALFQVATPGRPNRKLFYANEHDPELKGLGPNDIEPLWVDGARTKIHSWIVKPTGFDKNKVYPLAFLIHGGPQGSWGDSWSTRWNPRVWADQGYVVVAPNPTGSTGFGQKLTDDITNDWGGAPYKDLVKIWEHVRDHIKYIDTDNGIAAGASFGGFMVNWIQGHDLGRKFKALVSHDGTFVGSSKIGTDELFFIEHDFNGTFFEARQNYDRWDCSKPELVAKWSTPQLVIHNDFDFRLSVAEGVGLFNVLQEKGIPSRFLNFPDETHWVTKPENSLVWHQQVLGWINKWSGINKSNPKSIKLSDCPIEVVDHEAHSYFDY.

An N-terminal signal peptide occupies residues 1–19 (MAAAKWLIASLAFASSGLA). N-linked (GlcNAc...) asparagine glycosylation is found at Asn96 and Asn252. The disordered stretch occupies residues 269–291 (AEPINKRNGPRTPQAIEGASSSP). Ser558 serves as the catalytic Charge relay system. Residue Asn605 is glycosylated (N-linked (GlcNAc...) asparagine). Residues Asp641 and His673 each act as charge relay system in the active site. Asn699 is a glycosylation site (N-linked (GlcNAc...) asparagine).

Belongs to the peptidase S9C family.

The protein localises to the secreted. Extracellular dipeptidyl-peptidase which removes N-terminal dipeptides sequentially from polypeptides having unsubstituted N-termini. Contributes to pathogenicity. The sequence is that of Dipeptidyl-peptidase 5 (DPP5) from Trichophyton equinum (Horse ringworm fungus).